The chain runs to 425 residues: 2-oxoglutarate and iron-dependent oxygenase JMJD4 homolog (425 aa).

The JmjC domain occupies 165-316 (AAQMPGYNFY…MVWQNLKNNL (152 aa)). Fe cation contacts are provided by H212, D214, and H284.

Belongs to the JMJD6 family. Fe(2+) is required as a cofactor.

The protein localises to the nucleus. The protein resides in the cytoplasm. The enzyme catalyses L-lysyl-[protein] + 2-oxoglutarate + O2 = 4-hydroxy-L-lysyl-[protein] + succinate + CO2. Catalyzes the 2-oxoglutarate and iron-dependent C4-lysyl hydroxylation of eRF1 thereby promoting the translational termination efficiency of eRF1. May be involved in regulation of chromatin structure, promoting expansion of heterochromatin. In Drosophila melanogaster (Fruit fly), this protein is 2-oxoglutarate and iron-dependent oxygenase JMJD4 homolog.